Reading from the N-terminus, the 449-residue chain is Protein trichome birefringence-like 35 (449 aa).

The chain crosses the membrane as a helical; Signal-anchor for type II membrane protein span at residues 12–29 (LPLAGLLFILVVTFMILF). The GDS motif motif lies at 185–187 (GDS). The DCXHWCLPGXXDXWN motif signature appears at 428–442 (DCTHWCVPGVPDVWN).

The protein belongs to the PC-esterase family. TBL subfamily.

It localises to the membrane. May act as a bridging protein that binds pectin and other cell wall polysaccharides. Probably involved in maintaining esterification of pectins. May be involved in the specific O-acetylation of cell wall polymers. The polypeptide is Protein trichome birefringence-like 35 (TBL35) (Arabidopsis thaliana (Mouse-ear cress)).